The following is a 341-amino-acid chain: L-threonine 3-dehydrogenase (341 aa).

C38 lines the Zn(2+) pocket. Catalysis depends on charge relay system residues T40 and H43. 6 residues coordinate Zn(2+): H63, E64, C93, C96, C99, and C107. NAD(+) contacts are provided by residues I175, D195, R200, 262-264 (LGI), and 286-287 (IY).

This sequence belongs to the zinc-containing alcohol dehydrogenase family. In terms of assembly, homotetramer. It depends on Zn(2+) as a cofactor.

The protein resides in the cytoplasm. It catalyses the reaction L-threonine + NAD(+) = (2S)-2-amino-3-oxobutanoate + NADH + H(+). It participates in amino-acid degradation; L-threonine degradation via oxydo-reductase pathway; glycine from L-threonine: step 1/2. In terms of biological role, catalyzes the NAD(+)-dependent oxidation of L-threonine to 2-amino-3-ketobutyrate. The protein is L-threonine 3-dehydrogenase of Escherichia fergusonii (strain ATCC 35469 / DSM 13698 / CCUG 18766 / IAM 14443 / JCM 21226 / LMG 7866 / NBRC 102419 / NCTC 12128 / CDC 0568-73).